Reading from the N-terminus, the 434-residue chain is Serine hydroxymethyltransferase (434 aa).

(6S)-5,6,7,8-tetrahydrofolate contacts are provided by residues L124 and 128-130 (GHL). K233 is subject to N6-(pyridoxal phosphate)lysine. Residue E249 participates in (6S)-5,6,7,8-tetrahydrofolate binding.

The protein belongs to the SHMT family. As to quaternary structure, homodimer. It depends on pyridoxal 5'-phosphate as a cofactor.

It is found in the cytoplasm. The enzyme catalyses (6R)-5,10-methylene-5,6,7,8-tetrahydrofolate + glycine + H2O = (6S)-5,6,7,8-tetrahydrofolate + L-serine. It functions in the pathway one-carbon metabolism; tetrahydrofolate interconversion. The protein operates within amino-acid biosynthesis; glycine biosynthesis; glycine from L-serine: step 1/1. Catalyzes the reversible interconversion of serine and glycine with tetrahydrofolate (THF) serving as the one-carbon carrier. This reaction serves as the major source of one-carbon groups required for the biosynthesis of purines, thymidylate, methionine, and other important biomolecules. Also exhibits THF-independent aldolase activity toward beta-hydroxyamino acids, producing glycine and aldehydes, via a retro-aldol mechanism. This is Serine hydroxymethyltransferase from Synechococcus sp. (strain JA-3-3Ab) (Cyanobacteria bacterium Yellowstone A-Prime).